A 158-amino-acid chain; its full sequence is MNSQSFKNFPSLKFISKKRRKERLLMVLLCLFIMAITTGLIVYAMRNTANFFRTPSEITKEDILTGRVLRLGGIVEKGTVEHNGEMQVTFFVIDHLKHEKVVFNGLLPDLFREGQSVIVEGYFDKQGLFIGKRVLAKHDETYMSKETADRLKKHHDIK.

Over 1–23 (MNSQSFKNFPSLKFISKKRRKER) the chain is Cytoplasmic. The helical; Signal-anchor for type II membrane protein transmembrane segment at 24–44 (LLMVLLCLFIMAITTGLIVYA) threads the bilayer. Residues 45-158 (MRNTANFFRT…DRLKKHHDIK (114 aa)) lie on the Periplasmic side of the membrane. Residues histidine 138 and tyrosine 142 each coordinate heme.

This sequence belongs to the CcmE/CycJ family.

Its subcellular location is the cell inner membrane. Functionally, heme chaperone required for the biogenesis of c-type cytochromes. Transiently binds heme delivered by CcmC and transfers the heme to apo-cytochromes in a process facilitated by CcmF and CcmH. In Bartonella bacilliformis (strain ATCC 35685 / KC583 / Herrer 020/F12,63), this protein is Cytochrome c-type biogenesis protein CcmE.